A 908-amino-acid chain; its full sequence is MQQQHLFRLNILCLSLMTALPVYAENVQAEQAQEKQLDTIQVKAKKQKTRRDNEVTGLGKLVKSSDTLSKEQVLNIRDLTRYDPGIAVVEQGRGASSGYSIRGMDKNRVSLTVDGVSQIQSYTAQAALGGTRTAGSSGAINEIEYENVKAVEISKGSNSSEYGNGALAGSVAFQTKTAADIIGEGKQWGIQSKTAYSGKDHALTQSLALAGRSGGAEALLIYTKRRGREIHAHKDAGKGVQSFNRLVLDEDKKEGGSQYRYFIVEEECHNGYAACKNKLKEDASVKDERKTVSTQDYTGSNRLLANPLEYGSQSWLFRPGWHLDNRHYVGAVLERTQQTFDTRDMTVPAYFTSEDYVPGSLKGLGKYSGDNKAERLFVQGEGSTLQGIGYGTGVFYDERHTKNRYGVEYVYHNADKDTWADYARLSYDRQGIDLDNRLQQTHCSHDGSDKNCRPDGNKPYSFYKSDRMIYEESRNLFQAVFKKAFDTAKIRHNLSINLGYDRFKSQLSHSDYYLQNAVQAYDLITPKKPPFPNGSKDNPYRVSIGKTTVNTSPICRFGNNTYTDCTPRNIGGNGYYAAVQDNVRLGRWADVGAGIRYDYRSTHSEDKSVSTGTHRNLSWNAGVVLKPFTWMDLTYRASTGFRLPSFAEMYGWRAGESLKTLDLKPEKSFNREAGIVFKGDFGNLEASYFNNAYRDLIAFGYETRTQNGQTSASGDPGYRNAQNARIAGINILGKIDWHGVWGGLPDGLYSTLAYNRIKVKDADIRADRTFVTSYLFDAVQPSRYVLGLGYDHPDGIWGINTMFTYSKAKSVDELLGSQALLNGNANAKKAASRRTRPWYVTDVSGYYNIKKHLTLRAGVYNLLNYRYVTWENVRQTAGGAVNQHKNVGVYNRYAAPGRNYTFSLEMKF.

An N-terminal signal peptide occupies residues 1–24 (MQQQHLFRLNILCLSLMTALPVYA). The TonB box signature appears at 38 to 45 (DTIQVKAK). One can recognise a TBDR plug domain in the interval 51–176 (RDNEVTGLGK…LAGSVAFQTK (126 aa)). Residues 187-908 (QWGIQSKTAY…NYTFSLEMKF (722 aa)) form the TBDR beta-barrel domain. Positions 891 to 908 (NRYAAPGRNYTFSLEMKF) match the TonB C-terminal box motif.

This sequence belongs to the TonB-dependent receptor family. As to quaternary structure, binds both human apo- and holo-transferrin (TF), via the TF C-terminus. Forms a large complex with TF and TbpB.

Its subcellular location is the cell outer membrane. Its function is as follows. Neisseria acquires iron by extracting it from serum transferrin (TF) in its human host. Acts as a TF receptor and is required for TF utilization. Binds both apo- and holo-TF, via the TF C-terminus. The chain is Transferrin-binding protein A from Neisseria meningitidis serogroup B.